A 627-amino-acid chain; its full sequence is tRNA uridine 5-carboxymethylaminomethyl modification enzyme MnmG (627 aa).

Residues 13–18, Val125, and Ser180 contribute to the FAD site; that span reads GGGHAG. 274-288 provides a ligand contact to NAD(+); it reads GPRYCPSIEDKVVRF. Gln371 provides a ligand contact to FAD.

Belongs to the MnmG family. In terms of assembly, homodimer. Heterotetramer of two MnmE and two MnmG subunits. FAD is required as a cofactor.

The protein localises to the cytoplasm. NAD-binding protein involved in the addition of a carboxymethylaminomethyl (cmnm) group at the wobble position (U34) of certain tRNAs, forming tRNA-cmnm(5)s(2)U34. In Francisella tularensis subsp. tularensis (strain FSC 198), this protein is tRNA uridine 5-carboxymethylaminomethyl modification enzyme MnmG.